A 338-amino-acid chain; its full sequence is Ketol-acid reductoisomerase (NADP(+)) (338 aa).

The KARI N-terminal Rossmann domain maps to 1-181 (MKVFYDNDAD…GGTRAGVIET (181 aa)). NADP(+) is bound by residues 24–27 (YGSQ), R47, S50, S52, and 82–85 (DEGQ). The active site involves H107. An NADP(+)-binding site is contributed by G133. The region spanning 182-327 (SFREETETDL…SKLRSMMTWI (146 aa)) is the KARI C-terminal knotted domain. Mg(2+)-binding residues include D190, E194, E226, and E230. S251 is a binding site for substrate.

Belongs to the ketol-acid reductoisomerase family. Mg(2+) is required as a cofactor.

The enzyme catalyses (2R)-2,3-dihydroxy-3-methylbutanoate + NADP(+) = (2S)-2-acetolactate + NADPH + H(+). It catalyses the reaction (2R,3R)-2,3-dihydroxy-3-methylpentanoate + NADP(+) = (S)-2-ethyl-2-hydroxy-3-oxobutanoate + NADPH + H(+). The protein operates within amino-acid biosynthesis; L-isoleucine biosynthesis; L-isoleucine from 2-oxobutanoate: step 2/4. It functions in the pathway amino-acid biosynthesis; L-valine biosynthesis; L-valine from pyruvate: step 2/4. Its function is as follows. Involved in the biosynthesis of branched-chain amino acids (BCAA). Catalyzes an alkyl-migration followed by a ketol-acid reduction of (S)-2-acetolactate (S2AL) to yield (R)-2,3-dihydroxy-isovalerate. In the isomerase reaction, S2AL is rearranged via a Mg-dependent methyl migration to produce 3-hydroxy-3-methyl-2-ketobutyrate (HMKB). In the reductase reaction, this 2-ketoacid undergoes a metal-dependent reduction by NADPH to yield (R)-2,3-dihydroxy-isovalerate. This chain is Ketol-acid reductoisomerase (NADP(+)), found in Acidithiobacillus ferrooxidans (strain ATCC 23270 / DSM 14882 / CIP 104768 / NCIMB 8455) (Ferrobacillus ferrooxidans (strain ATCC 23270)).